A 352-amino-acid chain; its full sequence is MTVAIGRSDSERGWFDVLDDWLKRDRFVFLGWSGLLLLPCAYLAVGAWFTGTTFVTSWYTHGLASSYLEGCNFLTAAVSTPANSMGHSILFVWGPEAQGDFTRWCQIGGLWTFTALHGALGLIGFTLRQFEIARLIGLRPYNAIAFSGPIAVFVSVFLLYPLGQAGWFFAPSFGVAAIFRFLLFFQGFHNWTLNPFHMMGVAGVLGAALLCAIHGATVENTLFEDGDGSNTFPAFNPTQAEETYSMVTANRFWSQIFGVAFSNKRWLHFFMLFVPVTGLWMSAIGVVGLGVNLRAYDFVSQEIRAAEDPEFETFYTKNLLLNEGIRAWMAVQDQPHENFVFSEEVLPRGNAL.

Residues 40–60 (CAYLAVGAWFTGTTFVTSWYT) form a helical membrane-spanning segment. His117 lines the chlorophyll a pocket. The chain crosses the membrane as a helical span at residues 124–140 (GFTLRQFEIARLIGLRP). Residues Gln129 and Asn142 each contribute to the pheophytin a site. A helical membrane pass occupies residues 152–165 (VFVSVFLLYPLGQA). His197 is a chlorophyll a binding site. The chain crosses the membrane as a helical span at residues 207 to 227 (AALLCAIHGATVENTLFEDGD). 2 residues coordinate a plastoquinone: His214 and Phe261. His214 contacts Fe cation. His268 is a Fe cation binding site. Residues 278–294 (GLWMSAIGVVGLGVNLR) traverse the membrane as a helical segment.

Belongs to the reaction center PufL/M/PsbA/D family. As to quaternary structure, PSII is composed of 1 copy each of membrane proteins PsbA, PsbB, PsbC, PsbD, PsbE, PsbF, PsbH, PsbI, PsbJ, PsbK, PsbL, PsbM, PsbT, PsbX, PsbY, PsbZ, Psb30/Ycf12, at least 3 peripheral proteins of the oxygen-evolving complex and a large number of cofactors. It forms dimeric complexes. Requires The D1/D2 heterodimer binds P680, chlorophylls that are the primary electron donor of PSII, and subsequent electron acceptors. It shares a non-heme iron and each subunit binds pheophytin, quinone, additional chlorophylls, carotenoids and lipids. There is also a Cl(-1) ion associated with D1 and D2, which is required for oxygen evolution. The PSII complex binds additional chlorophylls, carotenoids and specific lipids. as cofactor.

The protein localises to the plastid. It localises to the cyanelle thylakoid membrane. The enzyme catalyses 2 a plastoquinone + 4 hnu + 2 H2O = 2 a plastoquinol + O2. Functionally, photosystem II (PSII) is a light-driven water:plastoquinone oxidoreductase that uses light energy to abstract electrons from H(2)O, generating O(2) and a proton gradient subsequently used for ATP formation. It consists of a core antenna complex that captures photons, and an electron transfer chain that converts photonic excitation into a charge separation. The D1/D2 (PsbA/PsbD) reaction center heterodimer binds P680, the primary electron donor of PSII as well as several subsequent electron acceptors. D2 is needed for assembly of a stable PSII complex. This is Photosystem II D2 protein from Cyanophora paradoxa.